The chain runs to 142 residues: Probable pilin MJ0832.1 (142 aa).

The propeptide occupies 1–8 (MLKFRKRG). Positions 9–17 (QISLEFSLL) match the QXSXEXXXL motif.

In terms of processing, the N-terminus is cleaved by the prepilin peptidase EppA, which recognizes the class III signal sequence.

The protein resides in the secreted. It localises to the cell surface. It is found in the fimbrium. This is Probable pilin MJ0832.1 from Methanocaldococcus jannaschii (strain ATCC 43067 / DSM 2661 / JAL-1 / JCM 10045 / NBRC 100440) (Methanococcus jannaschii).